The sequence spans 125 residues: Histone H2A (125 aa).

Basic residues predominate over residues 1–18 (MSGRGKGGKAKGKSKSRS). The tract at residues 1 to 23 (MSGRGKGGKAKGKSKSRSSRAGL) is disordered. An N-acetylserine modification is found at S2. A Phosphoserine modification is found at S2. At Q104 the chain carries N5-methylglutamine.

This sequence belongs to the histone H2A family. The nucleosome is a histone octamer containing two molecules each of H2A, H2B, H3 and H4 assembled in one H3-H4 heterotetramer and two H2A-H2B heterodimers. The octamer wraps approximately 147 bp of DNA.

The protein localises to the nucleus. It is found in the chromosome. In terms of biological role, core component of nucleosome. Nucleosomes wrap and compact DNA into chromatin, limiting DNA accessibility to the cellular machineries which require DNA as a template. Histones thereby play a central role in transcription regulation, DNA repair, DNA replication and chromosomal stability. DNA accessibility is regulated via a complex set of post-translational modifications of histones, also called histone code, and nucleosome remodeling. This chain is Histone H2A, found in Urechis caupo (Innkeeper worm).